Here is a 455-residue protein sequence, read N- to C-terminus: Asparagine--tRNA ligase (455 aa).

Belongs to the class-II aminoacyl-tRNA synthetase family. In terms of assembly, homodimer.

The protein resides in the cytoplasm. It carries out the reaction tRNA(Asn) + L-asparagine + ATP = L-asparaginyl-tRNA(Asn) + AMP + diphosphate + H(+). The sequence is that of Asparagine--tRNA ligase from Mycoplasma pneumoniae (strain ATCC 29342 / M129 / Subtype 1) (Mycoplasmoides pneumoniae).